The sequence spans 270 residues: Sulfur carrier protein FdhD (270 aa).

The active-site Cysteine persulfide intermediate is the Cys-116. Phe-253 to Lys-258 serves as a coordination point for Mo-bis(molybdopterin guanine dinucleotide).

The protein belongs to the FdhD family.

It is found in the cytoplasm. Its function is as follows. Required for formate dehydrogenase (FDH) activity. Acts as a sulfur carrier protein that transfers sulfur from IscS to the molybdenum cofactor prior to its insertion into FDH. This chain is Sulfur carrier protein FdhD, found in Haemophilus influenzae (strain 86-028NP).